A 351-amino-acid chain; its full sequence is Glycerol-3-phosphate dehydrogenase 1-like protein (351 aa).

Residue 11 to 16 (GSGNWG) participates in NAD(+) binding. Lys121 contacts substrate. Ala154 lines the NAD(+) pocket. Lys205 serves as the catalytic Proton acceptor. Arg271, Lys298, and Gln300 together coordinate NAD(+). 271–272 (RN) contributes to the substrate binding site.

It belongs to the NAD-dependent glycerol-3-phosphate dehydrogenase family.

It is found in the cytoplasm. The enzyme catalyses sn-glycerol 3-phosphate + NAD(+) = dihydroxyacetone phosphate + NADH + H(+). Functionally, plays a role in regulating cardiac sodium current. The polypeptide is Glycerol-3-phosphate dehydrogenase 1-like protein (gpd1l) (Danio rerio (Zebrafish)).